A 168-amino-acid polypeptide reads, in one-letter code: MMVLGRIVAPFGVQGWLKIHPFGDDPAAWRKMTHWWLAEDPDGPESAWVQYKLASCRPHGKGLVALLEGVPDRNAAEAIEGRYVGAPRDAMPAPEKDEYYWGDLVGLDVVNETDETLGRVSGLISTGAHDVLQVEDGETERLIPFVAAYVLDVDLAARRIRVAWQKDW.

The 73-residue stretch at 96–168 (KDEYYWGDLV…RIRVAWQKDW (73 aa)) folds into the PRC barrel domain.

It belongs to the RimM family. In terms of assembly, binds ribosomal protein uS19.

Its subcellular location is the cytoplasm. Functionally, an accessory protein needed during the final step in the assembly of 30S ribosomal subunit, possibly for assembly of the head region. Essential for efficient processing of 16S rRNA. May be needed both before and after RbfA during the maturation of 16S rRNA. It has affinity for free ribosomal 30S subunits but not for 70S ribosomes. This chain is Ribosome maturation factor RimM, found in Azoarcus sp. (strain BH72).